Here is a 454-residue protein sequence, read N- to C-terminus: tRNA modification GTPase MnmE (454 aa).

(6S)-5-formyl-5,6,7,8-tetrahydrofolate-binding residues include Arg23, Glu80, and Lys120. In terms of domain architecture, TrmE-type G spans Gly216–Gly377. Residue Asn226 coordinates K(+). Residues Asn226–Ser231, Thr245–Thr251, Asp270–Gly273, and Asn335–Asp338 contribute to the GTP site. Mg(2+) is bound at residue Ser230. 3 residues coordinate K(+): Thr245, Ile247, and Thr250. Thr251 is a binding site for Mg(2+). Residue Lys454 coordinates (6S)-5-formyl-5,6,7,8-tetrahydrofolate.

It belongs to the TRAFAC class TrmE-Era-EngA-EngB-Septin-like GTPase superfamily. TrmE GTPase family. Homodimer. Heterotetramer of two MnmE and two MnmG subunits. K(+) is required as a cofactor.

The protein localises to the cytoplasm. In terms of biological role, exhibits a very high intrinsic GTPase hydrolysis rate. Involved in the addition of a carboxymethylaminomethyl (cmnm) group at the wobble position (U34) of certain tRNAs, forming tRNA-cmnm(5)s(2)U34. This chain is tRNA modification GTPase MnmE, found in Sodalis glossinidius (strain morsitans).